The chain runs to 359 residues: Mitochondrial glutathione transporter SLC25A39 (359 aa).

Topologically, residues Met-1–Gln-14 are mitochondrial intermembrane. Solcar repeat units follow at residues Ile-9–Phe-151, Ser-159–Trp-243, and Thr-253–Phe-347. A helical transmembrane segment spans residues Met-15–Val-35. At Lys-36 to Arg-121 the chain is on the mitochondrial matrix side. The [2Fe-2S] cluster site is built by Cys-74, Cys-78, Cys-88, and Cys-94. Residues Thr-122–Phe-142 form a helical membrane-spanning segment. Residues Thr-143 to Asp-160 are Mitochondrial intermembrane-facing. Residues Leu-161–Pro-181 form a helical membrane-spanning segment. Residues Leu-182–Ser-214 lie on the Mitochondrial matrix side of the membrane. The chain crosses the membrane as a helical span at residues Leu-215 to Phe-235. The Mitochondrial intermembrane segment spans residues Asn-236–Ser-258. The chain crosses the membrane as a helical span at residues Phe-259–Val-279. Over Lys-280–Lys-317 the chain is Mitochondrial matrix. The chain crosses the membrane as a helical span at residues Gly-318–Ile-338. The Mitochondrial intermembrane portion of the chain corresponds to Ser-339 to Gly-359.

It belongs to the mitochondrial carrier (TC 2.A.29) family. Cleaved and degraded by AFG3L2; degradation by AFG3L2 is regulated by the ability of SLC25A39 to bind iron-sulfur. In absence of mitochondrial glutathione, SLC25A39 binds iron-sulfur, preventing cleavage and degradation by AFG3L2. The presence of mitochondrial glutathione prevents iron-sulfur-binding to SLC25A39, promoting cleavage and degradation by AFG3L2. In terms of tissue distribution, expressed in many tissues. Abundant in testis and kidney.

It localises to the mitochondrion inner membrane. It catalyses the reaction glutathione(in) = glutathione(out). With respect to regulation, the activity of SLC25A39 is regulated by levels of mitochondrial glutathione via its ability to bind [2Fe-2S] iron-sulfur cluster. Upon physiological levels of mitochondrial glutathione, glutathione prevents iron-sulfur-binding to SLC25A39 promoting cleavage and degradation by AFG3L2. Upon depletion of mitochondrial glutathione, SLC25A39 binds iron-sulfur, preventing cleavage and degradation by AFG3L2. In terms of biological role, mitochondrial transporter required for glutathione import into mitochondria. Glutathione, which plays key roles in oxidative metabolism, is produced exclusively in the cytosol and is imported in many organelles. Mitochondrial glutathione is required for the activity and stability of proteins containing iron-sulfur clusters, as well as erythropoiesis. This Homo sapiens (Human) protein is Mitochondrial glutathione transporter SLC25A39.